The primary structure comprises 142 residues: Nucleoside diphosphate kinase (142 aa).

The ATP site is built by lysine 11, phenylalanine 59, arginine 87, threonine 93, arginine 104, and asparagine 114. Histidine 117 serves as the catalytic Pros-phosphohistidine intermediate.

This sequence belongs to the NDK family. Homotetramer. Mg(2+) is required as a cofactor.

It localises to the cytoplasm. The enzyme catalyses a 2'-deoxyribonucleoside 5'-diphosphate + ATP = a 2'-deoxyribonucleoside 5'-triphosphate + ADP. It carries out the reaction a ribonucleoside 5'-diphosphate + ATP = a ribonucleoside 5'-triphosphate + ADP. In terms of biological role, major role in the synthesis of nucleoside triphosphates other than ATP. The ATP gamma phosphate is transferred to the NDP beta phosphate via a ping-pong mechanism, using a phosphorylated active-site intermediate. This chain is Nucleoside diphosphate kinase, found in Aeromonas salmonicida (strain A449).